Reading from the N-terminus, the 383-residue chain is Mannan endo-1,4-beta-mannosidase A (383 aa).

The N-terminal stretch at 1–18 (MKFSQALLSLASLALAAA) is a signal peptide. Residue Asn-75 is glycosylated (N-linked (GlcNAc...) asparagine). Trp-97 serves as a coordination point for substrate. Residue Asn-199 is glycosylated (N-linked (GlcNAc...) asparagine). Residues Asn-210 and 211–213 (EPR) contribute to the substrate site. The Proton donor/acceptor role is filled by Glu-211. Residues Cys-214 and Cys-217 are joined by a disulfide bond. Tyr-279 and Trp-283 together coordinate substrate. Cys-301 and Cys-308 are joined by a disulfide. Glu-312 acts as the Nucleophile in catalysis. Cys-320 and Cys-369 form a disulfide bridge. N-linked (GlcNAc...) asparagine glycosylation occurs at Asn-332. Residue Trp-342 coordinates substrate.

The protein belongs to the glycosyl hydrolase 5 (cellulase A) family. Monomer.

The protein localises to the secreted. The catalysed reaction is Random hydrolysis of (1-&gt;4)-beta-D-mannosidic linkages in mannans, galactomannans and glucomannans.. In terms of biological role, endo-1,4-mannanase that catalyzes the random hydrolysis of (1-&gt;4)-beta-D-mannosidic linkages in mannans and heteromannans. It is a crucial enzyme for depolymerization of seed galactomannans and wood galactoglucomannans. Active against locust bean gum and gum guar. Also has transglycosylation activity. The chain is Mannan endo-1,4-beta-mannosidase A (manA) from Emericella nidulans (strain FGSC A4 / ATCC 38163 / CBS 112.46 / NRRL 194 / M139) (Aspergillus nidulans).